We begin with the raw amino-acid sequence, 953 residues long: Coatomer subunit beta (953 aa).

An N-acetylthreonine modification is found at threonine 2. 6 HEAT repeats span residues 96–131 (HEMI…KEAE), 132–168 (LLEP…NFEH), 240–276 (SERA…SAPT), 277–314 (AIKA…HPAH), 316–353 (RVLQ…SRNV), and 396–433 (DMAA…RFDN). An N6-acetyllysine modification is found at lysine 494.

Oligomeric complex that consists of at least the alpha, beta, beta', gamma, delta, epsilon and zeta subunits. Interacts (via C-terminus) with HIV-1 Nef; the interaction is direct. Interacts with CAPN8 and PRKCE. Interacts with SCYL1. Interacts with COPG1. Interacts with ARF1 (myristoylated); this interaction is required for binding of COPB1 to Golgi membranes. Interacts (via trunk domain) with ARF1 (via switch I region); the interaction is direct. Interacts with KCNK2 (via N-terminus); this interaction increases the channel-mediated whole cell currents and promotes plasma membrane expression of KCNK2. Interacts with anthrax lethal factor (LF); this interaction may facilitate endosomal vesicle membrane translocation of LF and its release from the lumen of endosomal vesicles to external milieu. Interacts with STX17. Interacts with TMEM115. Interacts with TMEM41B.

It is found in the cytoplasm. The protein localises to the golgi apparatus membrane. Its subcellular location is the cytoplasmic vesicle. It localises to the COPI-coated vesicle membrane. The protein resides in the cell membrane. It is found in the endoplasmic reticulum-Golgi intermediate compartment. Functionally, the coatomer is a cytosolic protein complex that binds to dilysine motifs and reversibly associates with Golgi non-clathrin-coated vesicles, which further mediate biosynthetic protein transport from the ER, via the Golgi up to the trans Golgi network. Coatomer complex is required for budding from Golgi membranes, and is essential for the retrograde Golgi-to-ER transport of dilysine-tagged proteins. In mammals, the coatomer can only be recruited by membranes associated to ADP-ribosylation factors (ARFs), which are small GTP-binding proteins; the complex also influences the Golgi structural integrity, as well as the processing, activity, and endocytic recycling of LDL receptors. Plays a functional role in facilitating the transport of kappa-type opioid receptor mRNAs into axons and enhances translation of these proteins. Required for limiting lipid storage in lipid droplets. Involved in lipid homeostasis by regulating the presence of perilipin family members PLIN2 and PLIN3 at the lipid droplet surface and promoting the association of adipocyte surface triglyceride lipase (PNPLA2) with the lipid droplet to mediate lipolysis. Involved in the Golgi disassembly and reassembly processes during cell cycle. Involved in autophagy by playing a role in early endosome function. Plays a role in organellar compartmentalization of secretory compartments including endoplasmic reticulum (ER)-Golgi intermediate compartment (ERGIC), Golgi, trans-Golgi network (TGN) and recycling endosomes, and in biosynthetic transport of CAV1. Promotes degradation of Nef cellular targets CD4 and MHC class I antigens by facilitating their trafficking to degradative compartments. This Pongo abelii (Sumatran orangutan) protein is Coatomer subunit beta (COPB1).